Consider the following 358-residue polypeptide: Heme A synthase (358 aa).

The next 8 helical transmembrane spans lie at Ile-22–Ala-42, Val-107–Lys-127, Ile-133–Trp-153, Leu-172–Gly-192, Phe-208–Gly-228, Phe-269–Val-289, Ala-302–His-322, and Val-324–Val-344. His-271 provides a ligand contact to heme. His-332 contacts heme.

Belongs to the COX15/CtaA family. Type 2 subfamily. As to quaternary structure, interacts with CtaB. Heme b is required as a cofactor.

It localises to the cell membrane. It catalyses the reaction Fe(II)-heme o + 2 A + H2O = Fe(II)-heme a + 2 AH2. Its pathway is porphyrin-containing compound metabolism; heme A biosynthesis; heme A from heme O: step 1/1. Catalyzes the conversion of heme O to heme A by two successive hydroxylations of the methyl group at C8. The first hydroxylation forms heme I, the second hydroxylation results in an unstable dihydroxymethyl group, which spontaneously dehydrates, resulting in the formyl group of heme A. The polypeptide is Heme A synthase (Bartonella bacilliformis (strain ATCC 35685 / KC583 / Herrer 020/F12,63)).